The sequence spans 179 residues: MKQFLDFLPLIVFFAFYKLYDIYVASGALIVATALALVFTWFKYRKIEKMTLITFLMVLVFGTLTLVFHNDLFIKWKVTIIYTLFALALLISQLVLKKPLVQRMLGKELTLPDKVWNSLNLAWAVFFLVCGLANIYVAFWLPQSVWVNFKVFGLTALTLVFTLLSGVYIYRHMPEEQKK.

The next 5 helical transmembrane spans lie at 22-42 (IYVA…FTWF), 50-70 (MTLI…VFHN), 76-96 (WKVT…QLVL), 121-141 (LAWA…AFWL), and 149-169 (FKVF…GVYI).

Belongs to the YciB family.

The protein resides in the cell inner membrane. Its function is as follows. Plays a role in cell envelope biogenesis, maintenance of cell envelope integrity and membrane homeostasis. The polypeptide is Inner membrane-spanning protein YciB (Serratia proteamaculans (strain 568)).